Reading from the N-terminus, the 100-residue chain is UPF0473 protein Lm4b_01511 (100 aa).

Belongs to the UPF0473 family.

This Listeria monocytogenes serotype 4b (strain CLIP80459) protein is UPF0473 protein Lm4b_01511.